The following is a 197-amino-acid chain: Ubiquitin-conjugating enzyme E2 T (197 aa).

Residues 2-152 (QRASRLKREL…ARQWTEKHAR (151 aa)) enclose the UBC core domain. Cysteine 86 serves as the catalytic Glycyl thioester intermediate. Glycyl lysine isopeptide (Lys-Gly) (interchain with G-Cter in ubiquitin) cross-links involve residues lysine 91 and lysine 182. Residues 149–197 (KHARQKQKADEEEMLDNLPEAGDSRVHNSTQKRKASQLVGIEKKFHPDV) are disordered. Serine 184 carries the phosphoserine modification. Glycyl lysine isopeptide (Lys-Gly) (interchain with G-Cter in SUMO2) cross-links involve residues lysine 191 and lysine 192.

Belongs to the ubiquitin-conjugating enzyme family. In terms of assembly, directly interacts with FANCL. Interacts with BRCA1. Post-translationally, auto-ubiquitinated. Effects of auto-monoubiquitination at Lys-91 and Lys-182 are unclear: according to a report, monoubiquitination inactivates E2 enzyme activity. In contrast, according to another report, autoubiquitination does not affect E2 enzyme activity.

Its subcellular location is the nucleus. The enzyme catalyses S-ubiquitinyl-[E1 ubiquitin-activating enzyme]-L-cysteine + [E2 ubiquitin-conjugating enzyme]-L-cysteine = [E1 ubiquitin-activating enzyme]-L-cysteine + S-ubiquitinyl-[E2 ubiquitin-conjugating enzyme]-L-cysteine.. It participates in protein modification; protein ubiquitination. Accepts ubiquitin from the E1 complex and catalyzes its covalent attachment to other proteins. Catalyzes monoubiquitination. Involved in mitomycin-C (MMC)-induced DNA repair. Acts as a specific E2 ubiquitin-conjugating enzyme for the Fanconi anemia complex by associating with E3 ubiquitin-protein ligase FANCL and catalyzing monoubiquitination of FANCD2, a key step in the DNA damage pathway. Also mediates monoubiquitination of FANCL and FANCI. May contribute to ubiquitination and degradation of BRCA1. In vitro able to promote polyubiquitination using all 7 ubiquitin Lys residues, but may prefer 'Lys-11'-, 'Lys-27'-, 'Lys-48'- and 'Lys-63'-linked polyubiquitination. This chain is Ubiquitin-conjugating enzyme E2 T (UBE2T), found in Homo sapiens (Human).